Reading from the N-terminus, the 615-residue chain is DNA mismatch repair protein MutL (615 aa).

The tract at residues 363-397 (FAEPAAREPVAPRYTPAPASGSRPAAPWPNAQPGY) is disordered. Positions 364–391 (AEPAAREPVAPRYTPAPASGSRPAAPWP) are enriched in low complexity.

This sequence belongs to the DNA mismatch repair MutL/HexB family.

Its function is as follows. This protein is involved in the repair of mismatches in DNA. It is required for dam-dependent methyl-directed DNA mismatch repair. May act as a 'molecular matchmaker', a protein that promotes the formation of a stable complex between two or more DNA-binding proteins in an ATP-dependent manner without itself being part of a final effector complex. This chain is DNA mismatch repair protein MutL, found in Escherichia coli O9:H4 (strain HS).